The sequence spans 430 residues: MKETIEFLIDTVEARQVLDSRGNPTVEAEVFLECGASGRAIVPSGASTGAHEAHELRDGGSKYMGKGVLNAVNKIHETISPALCGLSSLDQIAVDKLMIEIDGTPNKSNLGANSILAVSLATARASANALDIPLYRYLGDPLSNLLPVPLMNVINGGAHAPNSLDFQEFMLVPHGVNNFSESLRMGTEIFHSLKSLLDQKGLSTAVGDEGGFAPNLSSSEEAGDLLLEAIQKAGFKPGEQVSLALDAASTEFYSDGIYKYEGKSLNSSEMISYLSRLVSNYPIVSIEDGLAEDDWEGWSELNKELGNKVQLVGDDLFVTNTERLRKGIMEKSANSILIKVNQIGTLTETLEAIELAKMSGFTSVISHRSGETEDTTIADLSVATRSGQIKTGSLSRSERIAKYNRLLKIEEELGNQARFAGALGLGPKNI.

Residue Gln167 coordinates (2R)-2-phosphoglycerate. Catalysis depends on Glu209, which acts as the Proton donor. Residues Asp246, Glu287, and Asp314 each coordinate Mg(2+). Positions 339, 368, 369, and 390 each coordinate (2R)-2-phosphoglycerate. The Proton acceptor role is filled by Lys339.

Belongs to the enolase family. Mg(2+) is required as a cofactor.

It localises to the cytoplasm. The protein localises to the secreted. Its subcellular location is the cell surface. It catalyses the reaction (2R)-2-phosphoglycerate = phosphoenolpyruvate + H2O. It participates in carbohydrate degradation; glycolysis; pyruvate from D-glyceraldehyde 3-phosphate: step 4/5. Catalyzes the reversible conversion of 2-phosphoglycerate (2-PG) into phosphoenolpyruvate (PEP). It is essential for the degradation of carbohydrates via glycolysis. In Prochlorococcus marinus (strain MIT 9301), this protein is Enolase.